Reading from the N-terminus, the 413-residue chain is Putative competence-damage inducible protein (413 aa).

This sequence belongs to the CinA family.

The polypeptide is Putative competence-damage inducible protein (Acetivibrio thermocellus (strain ATCC 27405 / DSM 1237 / JCM 9322 / NBRC 103400 / NCIMB 10682 / NRRL B-4536 / VPI 7372) (Clostridium thermocellum)).